A 161-amino-acid polypeptide reads, in one-letter code: SsrA-binding protein (161 aa).

This sequence belongs to the SmpB family.

Its subcellular location is the cytoplasm. Its function is as follows. Required for rescue of stalled ribosomes mediated by trans-translation. Binds to transfer-messenger RNA (tmRNA), required for stable association of tmRNA with ribosomes. tmRNA and SmpB together mimic tRNA shape, replacing the anticodon stem-loop with SmpB. tmRNA is encoded by the ssrA gene; the 2 termini fold to resemble tRNA(Ala) and it encodes a 'tag peptide', a short internal open reading frame. During trans-translation Ala-aminoacylated tmRNA acts like a tRNA, entering the A-site of stalled ribosomes, displacing the stalled mRNA. The ribosome then switches to translate the ORF on the tmRNA; the nascent peptide is terminated with the 'tag peptide' encoded by the tmRNA and targeted for degradation. The ribosome is freed to recommence translation, which seems to be the essential function of trans-translation. In Psychromonas ingrahamii (strain DSM 17664 / CCUG 51855 / 37), this protein is SsrA-binding protein.